Reading from the N-terminus, the 422-residue chain is Serine--tRNA ligase (422 aa).

229-231 contributes to the L-serine binding site; the sequence is TAE. 260–262 provides a ligand contact to ATP; that stretch reads RKE. Residue Glu283 participates in L-serine binding. 347-350 contacts ATP; it reads EISS. Ser383 lines the L-serine pocket.

The protein belongs to the class-II aminoacyl-tRNA synthetase family. Type-1 seryl-tRNA synthetase subfamily. Homodimer. The tRNA molecule binds across the dimer.

The protein resides in the cytoplasm. The enzyme catalyses tRNA(Ser) + L-serine + ATP = L-seryl-tRNA(Ser) + AMP + diphosphate + H(+). The catalysed reaction is tRNA(Sec) + L-serine + ATP = L-seryl-tRNA(Sec) + AMP + diphosphate + H(+). Its pathway is aminoacyl-tRNA biosynthesis; selenocysteinyl-tRNA(Sec) biosynthesis; L-seryl-tRNA(Sec) from L-serine and tRNA(Sec): step 1/1. Functionally, catalyzes the attachment of serine to tRNA(Ser). Is also able to aminoacylate tRNA(Sec) with serine, to form the misacylated tRNA L-seryl-tRNA(Sec), which will be further converted into selenocysteinyl-tRNA(Sec). In Natranaerobius thermophilus (strain ATCC BAA-1301 / DSM 18059 / JW/NM-WN-LF), this protein is Serine--tRNA ligase.